A 386-amino-acid chain; its full sequence is Probable copper-dependent oxygenase M1 (386 aa).

The first 22 residues, 1-22 (MLRMKKICTAFLTIALCTHVLA), serve as a signal peptide directing secretion. Asn-86 carries an N-linked (GlcNAc...) asparagine glycan. The helical transmembrane segment at 334-354 (FVVPIAAIAFIALTIGAGYVF) threads the bilayer.

Belongs to the clz3 oxygenase family.

Its subcellular location is the membrane. It participates in secondary metabolite biosynthesis. Functionally, probable copper-dependent oxygenase; part of the gene cluster that mediates the biosynthesis of squalestatin S1 (SQS1, also known as zaragozic acid A), a heavily oxidized fungal polyketide that offers potent cholesterol lowering activity by targeting squalene synthase (SS). SQS1 is composed of a 2,8-dioxobicyclic[3.2.1]octane-3,4,5-tricarboxyclic acid core that is connected to two lipophilic polyketide arms. These initial steps feature the priming of an unusual benzoic acid starter unit onto the highly reducing polyketide synthase pks2, followed by oxaloacetate extension and product release to generate a tricarboxylic acid containing product. The phenylalanine ammonia lyase (PAL) M7 and the acyl-CoA ligase M9 are involved in transforming phenylalanine into benzoyl-CoA. The citrate synthase-like protein R3 is involved in connecting the C-alpha-carbons of the hexaketide chain and oxaloacetate to afford the tricarboxylic acid unit. The potential hydrolytic enzymes, M8 and M10, are in close proximity to pks2 and may participate in product release. On the other side, the tetraketide arm is synthesized by a the squalestatin tetraketide synthase pks1 and enzymatically esterified to the core in the last biosynthetic step, by the acetyltransferase M4. The biosynthesis of the tetraketide must involve 3 rounds of chain extension. After the first and second rounds methyl-transfer occurs, and in all rounds of extension the ketoreductase and dehydratase are active. The enoyl reductase and C-MeT of pks1 are not active in the final round of extension. The acetyltransferase M4 appears to have a broad substrate selectivity for its acyl CoA substrate, allowing the in vitro synthesis of novel squalestatins. The biosynthesis of SQS1 requires several oxidative steps likely performed by oxidoreductases M1, R1 and R2. Finally, in support of the identification of the cluster as being responsible for SQS1 production, the cluster contains a gene encoding a putative squalene synthase (SS) R6, suggesting a likely mechanism for self-resistance. The chain is Probable copper-dependent oxygenase M1 from Phoma sp. (strain ATCC 20986 / MF5453).